The primary structure comprises 203 residues: Fucoxanthin-chlorophyll a-c binding protein, chloroplastic (203 aa).

The transit peptide at 1 to 30 (MKLAIAALLAGSAAAFAPAQSGKASTALNM) directs the protein to the chloroplast.

Belongs to the fucoxanthin chlorophyll protein family. As to quaternary structure, the LHC complex of chromophytic algae is composed of fucoxanthin, chlorophyll A and C bound non-covalently by fucoxanthin chlorophyll proteins (FCPs). The ratio of pigments in this LHC is; fucoxanthin: chlorophyll C: chlorophyll A; (0.6-1): (0.1-0.3): (1).

The protein localises to the plastid. The protein resides in the chloroplast thylakoid membrane. Its function is as follows. The light-harvesting complex (LHC) functions as a light receptor, it captures and delivers excitation energy to photosystems with which it is closely associated. Energy is transferred from the carotenoid and chlorophyll C (or B) to chlorophyll A and the photosynthetic reaction centers where it is used to synthesize ATP and reducing power. This Trieres chinensis (Marine centric diatom) protein is Fucoxanthin-chlorophyll a-c binding protein, chloroplastic (FCPA).